A 381-amino-acid chain; its full sequence is MQPGAALQAMLLAVLLAKPRDSKGRLLSASDLDPRGGQLVCRGGTRRPCYKVIYFHDAFQRLNFEEAKETCMEDGGQLVSIETEDEQRLIEKFIENLLASDGDFWIGLKRLEEKQSNNTACQDLYAWTDGSTSQFRNWYVDEPSCGSEVCVVMYHQPSAPPGIGGSYMFQWNDDRCNMKNNFICKYHDDKPSTTPSIWPGGEATEPATPLLPEETQKEDTKETFKERREAALNLAYILIPSIPLFLLLVVTSAVCWVWICRRKREQTDPSTKEQHTIWPTPRQENSPNLDVYNVIRKQSEADLAEPRPDLKNISFRVCSGEAMPDDMSCDYENIAVNPSESGFVTLASMESGFVTNDIYEFSPDRMGRSKESGWVENEIYY.

Positions 1-24 (MQPGAALQAMLLAVLLAKPRDSKG) are cleaved as a signal peptide. The Extracellular portion of the chain corresponds to 25–235 (RLLSASDLDP…ERREAALNLA (211 aa)). The C-type lectin domain maps to 45 to 185 (TRRPCYKVIY…CNMKNNFICK (141 aa)). Cystine bridges form between Cys71–Cys184 and Cys150–Cys176. An N-linked (GlcNAc...) asparagine glycan is attached at Asn117. The helical transmembrane segment at 236–256 (YILIPSIPLFLLLVVTSAVCW) threads the bilayer. Residues 257 to 381 (VWICRRKREQ…SGWVENEIYY (125 aa)) are Cytoplasmic-facing. 2 positions are modified to phosphoserine: Ser286 and Ser299. Residues 330–374 (DYENIAVNPSESGFVTLASMESGFVTNDIYEFSPDRMGRSKESGW) are interaction with NF2. The tract at residues 337–381 (NPSESGFVTLASMESGFVTNDIYEFSPDRMGRSKESGWVENEIYY) is interaction with TLN1. 5 tandem repeats follow at residues 340 to 344 (ESGFV), 350 to 354 (ESGFV), 356 to 359 (NDIY), 371 to 375 (ESGWV), and 377 to 380 (NEIY). The 3 X 5 AA repeats of E-S-G-X-V stretch occupies residues 340–375 (ESGFVTLASMESGFVTNDIYEFSPDRMGRSKESGWV). The segment at 356 to 380 (NDIYEFSPDRMGRSKESGWVENEIY) is 2 X 4 AA repeats of N-X-I-Y.

Interacts with TLN1. Interacts with NF2 and RDX.

The protein localises to the membrane. Its function is as follows. Receptor for hyaluronate. The polypeptide is Layilin (Layn) (Mus musculus (Mouse)).